The primary structure comprises 317 residues: MPVQGSQRSLLGAVNSTPTATPHLRPAANQTGPQCLEVSIPDGLFLCLGLVSLVENTLVVAAIAKNRNLHSPMYCFICCLALSDLLVSVSSVLETAVLLLLGAGALAAQATVVQQLGNVIDVLLCSSMVSSLFFLGAIAMDRYISIFYALRYHSIVTLARARRAIAAIWAASILSSTLFIAYCDRTAALLCLVVFFLAMLVLMAVLYVHMLTQARQHAQGIARLHKRQRPVQQGWGLKGAATLTILLGVFFLCWGPFFLHLTLIAVCPQHPTCSCIFKNFRLFLALIVCNAIVDPLIYAFRSQELRKTLKEVLLFFW.

Over residues 1–20 (MPVQGSQRSLLGAVNSTPTA) the composition is skewed to polar residues. Residues 1–23 (MPVQGSQRSLLGAVNSTPTATPH) form a disordered region. The Extracellular segment spans residues 1 to 37 (MPVQGSQRSLLGAVNSTPTATPHLRPAANQTGPQCLE). An N-linked (GlcNAc...) asparagine glycan is attached at N29. The chain crosses the membrane as a helical span at residues 38–63 (VSIPDGLFLCLGLVSLVENTLVVAAI). Residues 64–72 (AKNRNLHSP) are Cytoplasmic-facing. Residues 73–93 (MYCFICCLALSDLLVSVSSVL) form a helical membrane-spanning segment. The Extracellular portion of the chain corresponds to 94–118 (ETAVLLLLGAGALAAQATVVQQLGN). The chain crosses the membrane as a helical span at residues 119 to 140 (VIDVLLCSSMVSSLFFLGAIAM). Topologically, residues 141-163 (DRYISIFYALRYHSIVTLARARR) are cytoplasmic. Residues 164 to 183 (AIAAIWAASILSSTLFIAYC) traverse the membrane as a helical segment. At 184 to 191 (DRTAALLC) the chain is on the extracellular side. The helical transmembrane segment at 192–211 (LVVFFLAMLVLMAVLYVHML) threads the bilayer. At 212 to 240 (TQARQHAQGIARLHKRQRPVQQGWGLKGA) the chain is on the cytoplasmic side. A helical membrane pass occupies residues 241-266 (ATLTILLGVFFLCWGPFFLHLTLIAV). The Extracellular portion of the chain corresponds to 267 to 279 (CPQHPTCSCIFKN). A helical membrane pass occupies residues 280-300 (FRLFLALIVCNAIVDPLIYAF). Residues 301 to 317 (RSQELRKTLKEVLLFFW) lie on the Cytoplasmic side of the membrane.

The protein belongs to the G-protein coupled receptor 1 family. Interacts with MGRN1, but does not undergo MGRN1-mediated ubiquitination; this interaction competes with GNAS-binding and thus inhibits agonist-induced cAMP production. Interacts with OPN3; the interaction results in a decrease in MC1R-mediated cAMP signaling and ultimately a decrease in melanin production in melanocytes.

The protein localises to the cell membrane. In terms of biological role, receptor for MSH (alpha, beta and gamma) and ACTH. The activity of this receptor is mediated by G proteins which activate adenylate cyclase. Mediates melanogenesis, the production of eumelanin (black/brown) and phaeomelanin (red/yellow), via regulation of cAMP signaling in melanocytes. The protein is Melanocyte-stimulating hormone receptor (MC1R) of Lemur catta (Ring-tailed lemur).